Consider the following 205-residue polypeptide: Ribosomal RNA small subunit methyltransferase G (205 aa).

S-adenosyl-L-methionine contacts are provided by residues glycine 76, leucine 81, isoleucine 127–glutamate 128, and arginine 140.

It belongs to the methyltransferase superfamily. RNA methyltransferase RsmG family.

The protein resides in the cytoplasm. It catalyses the reaction guanosine(527) in 16S rRNA + S-adenosyl-L-methionine = N(7)-methylguanosine(527) in 16S rRNA + S-adenosyl-L-homocysteine. In terms of biological role, specifically methylates the N7 position of guanine in position 527 of 16S rRNA. This is Ribosomal RNA small subunit methyltransferase G from Francisella tularensis subsp. tularensis (strain WY96-3418).